Reading from the N-terminus, the 497-residue chain is Serine/threonine-protein phosphatase 2A 56 kDa regulatory subunit beta isoform (497 aa).

Residues 1 to 19 are compositionally biased toward low complexity; the sequence is METKLPPASTPTSPSSPGL. 2 disordered regions span residues 1–55 and 473–497; these read METK…YQSN and QGTQGAKEAPVPRPTPQVAASGGQS. Phosphoserine occurs at positions 32, 35, 44, 46, 47, and 48. The span at 34–45 shows a compositional bias: basic residues; the sequence is RSLRRARPRRSH.

It belongs to the phosphatase 2A regulatory subunit B56 family. In terms of assembly, component of the serine/threonine-protein phosphatase 2A complex (PP2A). This complex consists of a common heterodimeric core enzyme, composed of a 36 kDa catalytic subunit (subunit C) and a 65 kDa constant scaffold subunit (PR65 or subunit A), that associates with a variety of regulatory subunits. Proteins that associate with the core dimer include three families of regulatory subunits B (the R2/B/PR55/B55, R3/B''/PR72/PR130/PR59 and R5/B'/B56 families), the 48 kDa variable regulatory subunit, viral proteins, and cell signaling molecules. Interacts with SGO1. Interacts with AKT1. Post-translationally, ubiquitinated by CUL3-KLHL15 complex; this modification leads to proteasomal degradation.

The protein localises to the cytoplasm. As the regulatory component of the serine/threonine-protein phosphatase 2A (PP2A) holoenzyme, modulates substrate specificity, subcellular localization, and responsiveness to phosphorylation. The phosphorylated form mediates the interaction between PP2A and AKT1, leading to AKT1 dephosphorylation. The chain is Serine/threonine-protein phosphatase 2A 56 kDa regulatory subunit beta isoform (Ppp2r5b) from Mus musculus (Mouse).